We begin with the raw amino-acid sequence, 619 residues long: Zinc finger protein 668 (619 aa).

Position 1 is an N-acetylmethionine (Met-1). Ser-10 is subject to Phosphoserine. The C2H2-type 1 zinc-finger motif lies at Tyr-22–His-44. A disordered region spans residues Arg-36–Val-74. Residues Glu-51–Gly-71 are compositionally biased toward basic and acidic residues. Residues Lys-59, Lys-65, and Lys-80 each participate in a glycyl lysine isopeptide (Lys-Gly) (interchain with G-Cter in SUMO2) cross-link. 11 consecutive C2H2-type zinc fingers follow at residues Tyr-84–His-106, Phe-112–His-134, Phe-140–His-162, Tyr-168–His-190, Tyr-196–His-218, Phe-224–His-246, Tyr-252–His-274, Phe-280–His-302, Tyr-308–His-330, Phe-336–His-358, and Phe-364–His-386. Lys-154 participates in a covalent cross-link: Glycyl lysine isopeptide (Lys-Gly) (interchain with G-Cter in SUMO2). Ser-387 carries the post-translational modification Phosphoserine. The C2H2-type 13 zinc-finger motif lies at Phe-392–His-414. The disordered stretch occupies residues Val-491–Pro-513. Lys-512 participates in a covalent cross-link: Glycyl lysine isopeptide (Lys-Gly) (interchain with G-Cter in SUMO2). C2H2-type zinc fingers lie at residues Phe-516–His-538, Phe-544–His-566, and Tyr-572–His-594.

This sequence belongs to the krueppel C2H2-type zinc-finger protein family.

The protein resides in the nucleus. May be involved in transcriptional regulation. May play a role in DNA repair process. This Mus musculus (Mouse) protein is Zinc finger protein 668 (Znf668).